Consider the following 202-residue polypeptide: Dephospho-CoA kinase (202 aa).

In terms of domain architecture, DPCK spans 3-201; sequence AIGLTGGIGS…QRYLGFAAAA (199 aa). Residue 11–16 coordinates ATP; it reads GSGKTT.

The protein belongs to the CoaE family.

It is found in the cytoplasm. It catalyses the reaction 3'-dephospho-CoA + ATP = ADP + CoA + H(+). The protein operates within cofactor biosynthesis; coenzyme A biosynthesis; CoA from (R)-pantothenate: step 5/5. Catalyzes the phosphorylation of the 3'-hydroxyl group of dephosphocoenzyme A to form coenzyme A. The chain is Dephospho-CoA kinase from Burkholderia lata (strain ATCC 17760 / DSM 23089 / LMG 22485 / NCIMB 9086 / R18194 / 383).